The following is a 106-amino-acid chain: uncharacterized protein (106 aa).

The next 2 helical transmembrane spans lie at Leu-46–Phe-68 and Ala-73–Ala-92.

It localises to the cell membrane. This is an uncharacterized protein from Bacillus subtilis (strain 168).